A 717-amino-acid polypeptide reads, in one-letter code: Nuclear factor of activated T-cells, cytoplasmic 1 (717 aa).

The segment at 1-38 (MPNTSFPVPSKFPLGPPAAVCGSGETLRPAPPSGGTMK) is disordered. Residues 120 to 125 (PRIEIT) are calcineurin-binding. Positions 128-220 (LGLHHGSGQF…CVSPKTTDPE (93 aa)) are transactivation domain A (TAD-A). Residues 202–298 (PQTSPWQSPC…PHGSPRVSVT (97 aa)) form a disordered region. A compositionally biased stretch (polar residues) spans 203–216 (QTSPWQSPCVSPKT). Tandem repeats lie at residues 205–221 (SPWQ…DPEE) and 235–251 (SPRH…ITEE). Residues 205 to 300 (SPWQSPCVSP…GSPRVSVTED (96 aa)) are 3 X SP repeats. Phosphoserine occurs at positions 235 and 239. The segment covering 238 to 250 (HSPSTSPRASITE) has biased composition (polar residues). Ser247 carries the phosphoserine; by PKA modification. Positions 267 to 269 (KRK) match the Nuclear localization signal motif. Ser271 and Ser296 each carry phosphoserine; by PKA. The stretch at 284-300 (SPTPSPHGSPRVSVTED) is repeat 3. The short motif at 312 to 323 (SAIVAAINALTT) is the Nuclear export signal element. One can recognise an RHD domain in the interval 411–593 (PSLPALDWQL…NPIECSQRSA (183 aa)). Residues 440 to 447 (RAHYETEG) mediate DNA binding. Positions 683 to 685 (KRK) match the Nuclear localization signal motif.

Member of the multicomponent NFATC transcription complex that consists of at least two components, a pre-existing cytoplasmic component NFATC2 and an inducible nuclear component NFATC1. Other members such as NFATC4, NFATC3 or members of the activating protein-1 family, MAF, GATA4 and Cbp/p300 can also bind the complex. NFATC proteins bind to DNA as monomers. Interacts with HOMER2 and HOMER3; this interaction may compete with calcineurin/PPP3CA-binding and hence prevent NFATC1 dephosphorylation and activation. Interacts with TLE6/GRG6. In terms of processing, phosphorylated by NFATC-kinase and GSK3B; phosphorylation induces NFATC1 nuclear exit and dephosphorylation by calcineurin promotes nuclear import. Phosphorylation by PKA and DYRK2 negatively modulates nuclear accumulation, and promotes subsequent phosphorylation by GSK3B or casein kinase 1. Expressed in the submandibular gland (at protein level). Expressed in basal epidermal cells (at protein level). Expressed in spleen, skeletal muscle and skin. Express in the lung and thymus. Weakly expressed in heart, brain, liver and kidney. Not expressed in testis. Expressed in osteoclasts. Also expressed during TNFSF11/RANKL-induced differentiation of bone marrow-derived macrophages to osteoclasts.

It is found in the cytoplasm. The protein localises to the nucleus. Functionally, plays a role in the inducible expression of cytokine genes in T-cells, especially in the induction of the IL-2 or IL-4 gene transcription. Also controls gene expression in embryonic cardiac cells. Could regulate not only the activation and proliferation but also the differentiation and programmed death of T-lymphocytes as well as lymphoid and non-lymphoid cells. Required for osteoclastogenesis and regulates many genes important for osteoclast differentiation and function. In Mus musculus (Mouse), this protein is Nuclear factor of activated T-cells, cytoplasmic 1 (Nfatc1).